A 446-amino-acid polypeptide reads, in one-letter code: Beta-glucosidase A (446 aa).

The active-site Proton donor is Glu-166. The active-site Nucleophile is Glu-351.

It belongs to the glycosyl hydrolase 1 family.

The enzyme catalyses Hydrolysis of terminal, non-reducing beta-D-glucosyl residues with release of beta-D-glucose.. It participates in glycan metabolism; cellulose degradation. The polypeptide is Beta-glucosidase A (bglA) (Thermotoga maritima (strain ATCC 43589 / DSM 3109 / JCM 10099 / NBRC 100826 / MSB8)).